The primary structure comprises 262 residues: Phosphate import ATP-binding protein PstB (262 aa).

The region spanning 16–257 (IDVRNLNFYY…PHRKETEDYI (242 aa)) is the ABC transporter domain. Position 48 to 55 (48 to 55 (GPSGCGKS)) interacts with ATP.

This sequence belongs to the ABC transporter superfamily. Phosphate importer (TC 3.A.1.7) family. The complex is composed of two ATP-binding proteins (PstB), two transmembrane proteins (PstC and PstA) and a solute-binding protein (PstS).

The protein localises to the cell inner membrane. It catalyses the reaction phosphate(out) + ATP + H2O = ADP + 2 phosphate(in) + H(+). Part of the ABC transporter complex PstSACB involved in phosphate import. Responsible for energy coupling to the transport system. The protein is Phosphate import ATP-binding protein PstB of Cupriavidus pinatubonensis (strain JMP 134 / LMG 1197) (Cupriavidus necator (strain JMP 134)).